The sequence spans 313 residues: Porphobilinogen deaminase (313 aa).

Cysteine 242 bears the S-(dipyrrolylmethanemethyl)cysteine mark.

The protein belongs to the HMBS family. In terms of assembly, monomer. The cofactor is dipyrromethane.

It catalyses the reaction 4 porphobilinogen + H2O = hydroxymethylbilane + 4 NH4(+). It functions in the pathway porphyrin-containing compound metabolism; protoporphyrin-IX biosynthesis; coproporphyrinogen-III from 5-aminolevulinate: step 2/4. In terms of biological role, tetrapolymerization of the monopyrrole PBG into the hydroxymethylbilane pre-uroporphyrinogen in several discrete steps. The chain is Porphobilinogen deaminase from Pectobacterium carotovorum subsp. carotovorum (strain PC1).